We begin with the raw amino-acid sequence, 505 residues long: 4-alpha-glucanotransferase (505 aa).

Belongs to the disproportionating enzyme family.

It is found in the cytoplasm. The enzyme catalyses Transfers a segment of a (1-&gt;4)-alpha-D-glucan to a new position in an acceptor, which may be glucose or a (1-&gt;4)-alpha-D-glucan.. This chain is 4-alpha-glucanotransferase (malQ), found in Streptococcus pneumoniae serotype 4 (strain ATCC BAA-334 / TIGR4).